Here is a 429-residue protein sequence, read N- to C-terminus: Oxysterol-binding protein-like protein OBPalpha (429 aa).

Belongs to the OSBP family.

This is Oxysterol-binding protein-like protein OBPalpha (OBPALPHA) from Candida albicans (strain SC5314 / ATCC MYA-2876) (Yeast).